The primary structure comprises 65 residues: Protein YSY6 (65 aa).

Residues 45-65 (LGILLFLLVGGGVLQLISYIL) form a helical membrane-spanning segment.

It belongs to the RAMP4 family.

The protein localises to the membrane. The protein resides in the endoplasmic reticulum membrane. Its function is as follows. Interacts with target proteins during their translocation into the lumen of the endoplasmic reticulum. Protects unfolded target proteins against degradation during ER stress. May facilitate glycosylation of target proteins after termination of ER stress. This chain is Protein YSY6 (YSY6), found in Saccharomyces cerevisiae (strain ATCC 204508 / S288c) (Baker's yeast).